Consider the following 468-residue polypeptide: UDP-N-acetylmuramoyl-L-alanine--L-glutamate ligase (468 aa).

122-128 contacts ATP; it reads GTKGKST.

This sequence belongs to the MurCDEF family. MurD2 subfamily.

The protein localises to the cytoplasm. The catalysed reaction is UDP-N-acetyl-alpha-D-muramoyl-L-alanine + L-glutamate + ATP = UDP-N-acetyl-alpha-D-muramoyl-L-alanyl-L-glutamate + ADP + phosphate + H(+). Its pathway is cell wall biogenesis; peptidoglycan biosynthesis. Its function is as follows. Cell wall formation. Catalyzes the addition of L-glutamate to the nucleotide precursor UDP-N-acetylmuramoyl-L-alanine. This is UDP-N-acetylmuramoyl-L-alanine--L-glutamate ligase from Xanthomonas euvesicatoria pv. vesicatoria (strain 85-10) (Xanthomonas campestris pv. vesicatoria).